Reading from the N-terminus, the 140-residue chain is Large ribosomal subunit protein uL11 (140 aa).

Belongs to the universal ribosomal protein uL11 family. In terms of assembly, part of the ribosomal stalk of the 50S ribosomal subunit. Interacts with L10 and the large rRNA to form the base of the stalk. L10 forms an elongated spine to which L12 dimers bind in a sequential fashion forming a multimeric L10(L12)X complex. One or more lysine residues are methylated.

In terms of biological role, forms part of the ribosomal stalk which helps the ribosome interact with GTP-bound translation factors. This Karelsulcia muelleri (strain GWSS) (Sulcia muelleri) protein is Large ribosomal subunit protein uL11.